The sequence spans 1040 residues: Multidrug resistance protein MdtB (1040 aa).

12 consecutive transmembrane segments (helical) span residues 16–36 (FIMRPVATTLLMVAILLAGII), 347–367 (LMMAIALVVMIIYLFLRNIPA), 369–389 (IIPGVAVPLSLIGTFAVMVFL), 396–416 (LTLMALTIATGFVVDDAIVVI), 440–460 (IGFTIISLTFSLIAVLIPLLF), 472–492 (FAITLAVAILISAVVSLTLTP), 537–557 (WLTLSVALSTLLLSVLLWVFI), 863–883 (LGSTVWLIVAAVVAMYIVLGI), 888–908 (FIHPITILSTLPTAGVGALLA), 911–931 (IAGSELDVIAIIGIILLIGIV), 968–988 (ILMTTLAALLGALPLMLSTGV), and 998–1018 (IGMVGGLIVSQVLTLFTTPVI).

This sequence belongs to the resistance-nodulation-cell division (RND) (TC 2.A.6) family. MdtB subfamily. In terms of assembly, part of a tripartite efflux system composed of MdtA, MdtB and MdtC. MdtB forms a heteromultimer with MdtC.

It is found in the cell inner membrane. In terms of biological role, the MdtABC tripartite complex confers resistance against novobiocin and deoxycholate. This Escherichia coli O9:H4 (strain HS) protein is Multidrug resistance protein MdtB.